Reading from the N-terminus, the 419-residue chain is Hyaluronan synthase (419 aa).

A run of 5 helical transmembrane segments spans residues 8-28 (LIVL…MYLF), 33-53 (VGIY…LSFL), 318-338 (IVAL…VAIG), 345-365 (AIQL…IVAL), and 376-396 (PASF…LQPL).

It belongs to the NodC/HAS family. Requires Mg(2+) as cofactor.

It is found in the cell membrane. It carries out the reaction [hyaluronan](n) + UDP-N-acetyl-alpha-D-glucosamine = N-acetyl-beta-D-glucosaminyl-(1-&gt;4)-[hyaluronan](n) + UDP + H(+). It catalyses the reaction N-acetyl-beta-D-glucosaminyl-(1-&gt;4)-[hyaluronan](n) + UDP-alpha-D-glucuronate = [hyaluronan](n+1) + UDP + H(+). It functions in the pathway glycan biosynthesis; hyaluronan biosynthesis. In terms of biological role, glycosaminoglycan synthesis. The hyaluronic acid capsule is involved in the pathogenicity of group A Streptococci; it may be the major virulence determinant. The chain is Hyaluronan synthase (hasA) from Streptococcus pyogenes serotype M6 (strain ATCC BAA-946 / MGAS10394).